A 323-amino-acid polypeptide reads, in one-letter code: MEVFDYENVQLIPNKCLISSRSEADTSVEFGGHRFKLPVVPANMASVIDDKLAIWLAENGYFYIMHRFEPGKRFNFVTDMKQRGLISSISVGVKEEEYRLIDELVDAGLTPDYITIDIAHGYANTVIDMIHYIKKHLPKAFVVAGNIATPDAVRELEDAGADATKVGIGPGRACITKLKTGFGTAGWQLAAVRLCAKAARKPIIADGGIRHNGDIAKSVRFGASMVMIGSLFAGHKQSPGSDLVIDHRHYKQYYGSASAKQKGVYKNVEGKDLLVPYRGDIANTLNEMAQDLQSSISYAGGNNLQALRTVNYVIVQNTIMNGD.

The active-site Thioimidate intermediate is C174. Position 203-226 (203-226 (IIADGGIRHNGDIAKSVRFGASMV)) interacts with NADP(+).

The protein belongs to the IMPDH/GMPR family. GuaC type 2 subfamily.

It catalyses the reaction IMP + NH4(+) + NADP(+) = GMP + NADPH + 2 H(+). Its function is as follows. Catalyzes the irreversible NADPH-dependent deamination of GMP to IMP. It functions in the conversion of nucleobase, nucleoside and nucleotide derivatives of G to A nucleotides, and in maintaining the intracellular balance of A and G nucleotides. The chain is GMP reductase from Oenococcus oeni (strain ATCC BAA-331 / PSU-1).